The following is a 309-amino-acid chain: DnaJ protein ERDJ7 (309 aa).

An N-terminal signal peptide occupies residues Met-1–Ala-36. At Ile-37–Asp-130 the chain is on the lumenal side. In terms of domain architecture, J spans Asp-43–Ile-107. Residue Asn-55 is glycosylated (N-linked (GlcNAc...) asparagine). Residues Pro-131–Phe-151 traverse the membrane as a helical segment. At Gly-152 to Leu-219 the chain is on the cytoplasmic side. A helical membrane pass occupies residues Tyr-220 to Phe-242. Residues Trp-243–Arg-309 are Lumenal-facing.

The protein resides in the endoplasmic reticulum membrane. In terms of biological role, may play a role in protein folding in the endoplasmic reticulum. This chain is DnaJ protein ERDJ7, found in Oryza sativa subsp. japonica (Rice).